Consider the following 476-residue polypeptide: Monofunctional riboflavin biosynthesis protein RIBA 2, chloroplastic (476 aa).

The N-terminal 54 residues, 1–54, are a transit peptide targeting the chloroplast; the sequence is MASLTLRCDSTHLLPSRDVVKGTKPFGTSLVYPRIISKKFNVRMRVIPEEGDVF. Residues 44 to 306 form a DHBP synthase region; it reads MRVIPEEGDV…IADLIRYRRK (263 aa). Residues 130–131, Asp135, 245–249, and Glu269 each bind D-ribulose 5-phosphate; these read RE and RAGHT. Residue Glu131 coordinates Mg(2+). His248 serves as a coordination point for Mg(2+). The interval 307–476 is inactive GTP cyclohydrolase II; it reads RERLVEFTAV…SGKVPLITTP (170 aa). Residues 357 to 361, Gln376, 399 to 401, and Thr450 each bind GTP; these read RVHAE and ESK.

It in the N-terminal section; belongs to the DHBP synthase family. The protein in the C-terminal section; belongs to the GTP cyclohydrolase II family. It depends on Mg(2+) as a cofactor. Mn(2+) is required as a cofactor. As to expression, expressed in leaves, shoots, roots, flowers and siliques.

Its subcellular location is the plastid. The protein localises to the chloroplast. It carries out the reaction D-ribulose 5-phosphate = (2S)-2-hydroxy-3-oxobutyl phosphate + formate + H(+). It functions in the pathway cofactor biosynthesis; riboflavin biosynthesis; 2-hydroxy-3-oxobutyl phosphate from D-ribulose 5-phosphate: step 1/1. Involved in riboflavin biosynthesis. Catalyzes the conversion of D-ribulose 5-phosphate to formate and 3,4-dihydroxy-2-butanone 4-phosphate. RIBA2 and RIBA3 together are not able to complement the loss of function of RIBA1. The sequence is that of Monofunctional riboflavin biosynthesis protein RIBA 2, chloroplastic (RIBA2) from Arabidopsis thaliana (Mouse-ear cress).